The chain runs to 205 residues: Outer-membrane lipoprotein LolB (205 aa).

Residues 1–17 (MFLRHFIVFSFIALLAG) form the signal peptide. A lipid anchor (N-palmitoyl cysteine) is attached at C18. C18 is lipidated: S-diacylglycerol cysteine.

It belongs to the LolB family. In terms of assembly, monomer.

It is found in the cell outer membrane. Plays a critical role in the incorporation of lipoproteins in the outer membrane after they are released by the LolA protein. In Pseudomonas fluorescens (strain ATCC BAA-477 / NRRL B-23932 / Pf-5), this protein is Outer-membrane lipoprotein LolB.